A 70-amino-acid chain; its full sequence is Probable tautomerase RSp0893 (70 aa).

Proline 2 (proton acceptor; via imino nitrogen) is an active-site residue.

It belongs to the 4-oxalocrotonate tautomerase family.

This is Probable tautomerase RSp0893 from Ralstonia nicotianae (strain ATCC BAA-1114 / GMI1000) (Ralstonia solanacearum).